A 216-amino-acid chain; its full sequence is Urease accessory protein UreG (216 aa).

GTP is bound at residue 24-31; that stretch reads GPVGSGKT.

Belongs to the SIMIBI class G3E GTPase family. UreG subfamily. In terms of assembly, homodimer. UreD, UreF and UreG form a complex that acts as a GTP-hydrolysis-dependent molecular chaperone, activating the urease apoprotein by helping to assemble the nickel containing metallocenter of UreC. The UreE protein probably delivers the nickel.

The protein resides in the cytoplasm. Its function is as follows. Facilitates the functional incorporation of the urease nickel metallocenter. This process requires GTP hydrolysis, probably effectuated by UreG. In Variovorax paradoxus (strain S110), this protein is Urease accessory protein UreG.